The following is a 59-amino-acid chain: Small ribosomal subunit protein bS21 (59 aa).

The disordered stretch occupies residues 34–59 (KHEHYEKPSVKRKKKSEAARRRKRSF). Residues 43–59 (VKRKKKSEAARRRKRSF) show a composition bias toward basic residues.

It belongs to the bacterial ribosomal protein bS21 family.

In Desulforudis audaxviator (strain MP104C), this protein is Small ribosomal subunit protein bS21.